The chain runs to 222 residues: Small ribosomal subunit protein uS3 (222 aa).

Residues 39–107 form the KH type-2 domain; it reads VREFLHKKLA…PVQINIEEVR (69 aa).

The protein belongs to the universal ribosomal protein uS3 family. In terms of assembly, part of the 30S ribosomal subunit. Forms a tight complex with proteins S10 and S14.

In terms of biological role, binds the lower part of the 30S subunit head. Binds mRNA in the 70S ribosome, positioning it for translation. In Francisella tularensis subsp. tularensis (strain FSC 198), this protein is Small ribosomal subunit protein uS3.